The sequence spans 271 residues: Phosphatidylglycerol--prolipoprotein diacylglyceryl transferase (271 aa).

The next 4 helical transmembrane spans lie at 25 to 45 (WYGI…KFFV), 60 to 80 (YFIW…ILIY), 103 to 123 (FVGI…IATL), and 131 to 151 (ANPW…YVFG). Arginine 152 lines the a 1,2-diacyl-sn-glycero-3-phospho-(1'-sn-glycerol) pocket. The next 3 membrane-spanning stretches (helical) occupy residues 181–201 (PSQL…VYLA), 209–229 (GELI…CEFY), and 235–255 (GIGF…IMFI).

Belongs to the Lgt family.

The protein resides in the cell inner membrane. It carries out the reaction L-cysteinyl-[prolipoprotein] + a 1,2-diacyl-sn-glycero-3-phospho-(1'-sn-glycerol) = an S-1,2-diacyl-sn-glyceryl-L-cysteinyl-[prolipoprotein] + sn-glycerol 1-phosphate + H(+). It participates in protein modification; lipoprotein biosynthesis (diacylglyceryl transfer). Catalyzes the transfer of the diacylglyceryl group from phosphatidylglycerol to the sulfhydryl group of the N-terminal cysteine of a prolipoprotein, the first step in the formation of mature lipoproteins. The protein is Phosphatidylglycerol--prolipoprotein diacylglyceryl transferase of Campylobacter jejuni (strain RM1221).